We begin with the raw amino-acid sequence, 159 residues long: Insertion element IS136 uncharacterized 16.9 kDa protein (159 aa).

Residues Arg-126–Ser-142 show a composition bias toward low complexity. The tract at residues Arg-126–Thr-159 is disordered.

The sequence is that of Insertion element IS136 uncharacterized 16.9 kDa protein from Agrobacterium tumefaciens (strain T37).